The sequence spans 688 residues: MTHKQRAIFEPALVRTALLDAVKKLDPRVQWRNPVMFVVYLGSWLTTLIWLDILSGHTTGSAMFTGSIALWLWFTVLFANMAEALAEGRSKAQAASLRGVKKTSWAKKLSEARVDAPQEKVSADSLRKGDLVLIEAGDTVPCDGEVLEGGASVDESAITGESAPVIRESGGDFSSVTGGTRVLSDWLVVECRVNPGETFLDRMIAMVEGAKRRKTPNEVALTILLVALTIVFLLATATLYPFSVFSVEASQAGSPVTITVLVALLVCLIPTTIGGLLSAIGVAGMSRMLGANVIATSGRAVEAAGDVDVLLLDKTGTITLGNRQASEFLPAPGVTEQQLADAAQLSSLADETPEGRSIVVLAKQRFNLRERDLHSLNATFIPFSAQTRMSGVNVQERMIRKGAVDAIRRHVESNQGHFPPAVDDLVASVARTGGTPLVVAEGSRVLGVVALKDIVKGGIKERFAELRKMGIKTVMITGDNRLTAAAIAAEAGVDDFLAEATPEAKLALIRQYQAEGRLVAMTGDGTNDAPALAQADVAVAMNSGTQAAKEAGNMVDLDSNPTKLIEVVHIGKQMLMTRGSLTTFSIANDVAKYFAIIPAAFAATYPQLNALNIMQLHSPSSAILSAVIFNALVIVFLIPLALKGVSYKAMSAAALLRRNLWIYGLGGLLVPFVGIKLIDLLLTALNMG.

The next 4 helical transmembrane spans lie at 34-54, 62-82, 219-239, and 260-280; these read PVMF…LDIL, AMFT…ANMA, VALT…TATL, and VLVA…LSAI. Residue aspartate 313 is the 4-aspartylphosphate intermediate of the active site. Residues aspartate 350, glutamate 354, 383–390, and lysine 401 each bind ATP; that span reads FSAQTRMS. Mg(2+)-binding residues include aspartate 524 and aspartate 528. A run of 3 helical transmembrane segments spans residues 594-614, 622-642, and 662-682; these read FAII…LNIM, AILS…PLAL, and IYGL…DLLL.

This sequence belongs to the cation transport ATPase (P-type) (TC 3.A.3) family. Type IA subfamily. The system is composed of three essential subunits: KdpA, KdpB and KdpC.

The protein localises to the cell inner membrane. It catalyses the reaction K(+)(out) + ATP + H2O = K(+)(in) + ADP + phosphate + H(+). Its function is as follows. Part of the high-affinity ATP-driven potassium transport (or Kdp) system, which catalyzes the hydrolysis of ATP coupled with the electrogenic transport of potassium into the cytoplasm. This subunit is responsible for energy coupling to the transport system and for the release of the potassium ions to the cytoplasm. The polypeptide is Potassium-transporting ATPase ATP-binding subunit (Yersinia pestis bv. Antiqua (strain Antiqua)).